The primary structure comprises 571 residues: Zinc metalloproteinase-disintegrin-like jararhagin (571 aa).

Positions 1 to 150 are excised as a propeptide; it reads ATRPKGAVQP…KKASQLAFTA (150 aa). The residue at position 151 (Glu-151) is a Pyrrolidone carboxylic acid (Glu). Residues 159-355 form the Peptidase M12B domain; the sequence is KYIEFFVVVD…HNPECIINEP (197 aa). Positions 162 and 246 each coordinate Ca(2+). 3 disulfides stabilise this stretch: Cys-270–Cys-350, Cys-310–Cys-334, and Cys-312–Cys-317. His-295 provides a ligand contact to Zn(2+). The active site involves Glu-296. Residues His-299 and His-305 each contribute to the Zn(2+) site. Asn-333 carries an N-linked (GlcNAc...) asparagine glycan. The Ca(2+) site is built by Cys-350, Asn-353, Val-365, Asn-368, Leu-370, Glu-372, Glu-375, and Asp-378. Residues 363-449 enclose the Disintegrin domain; that stretch reads PPVCGNELLE…ECPADVFHKN (87 aa). 22 disulfide bridges follow: Cys-366-Cys-385, Cys-366-Cys-395, Cys-377-Cys-390, Cys-377-Cys-395, Cys-379-Cys-385, Cys-389-Cys-412, Cys-403-Cys-409, Cys-408-Cys-434, Cys-421-Cys-441, Cys-428-Cys-453, Cys-428-Cys-460, Cys-453-Cys-465, Cys-460-Cys-465, Cys-472-Cys-487, Cys-472-Cys-522, Cys-487-Cys-533, Cys-500-Cys-510, Cys-510-Cys-517, Cys-517-Cys-559, Cys-522-Cys-533, Cys-553-Cys-564, and Cys-559-Cys-564. Residues 427 to 429 carry the D/ECD-tripeptide motif; the sequence is ECD. Ca(2+) is bound by residues Asp-429, Pro-430, Glu-432, Asp-444, and Val-445.

The protein belongs to the venom metalloproteinase (M12B) family. P-III subfamily. P-IIIb sub-subfamily. As to quaternary structure, monomer (Jararhagin and Jararhagin-C) and dimer (Jaracetin). Requires Zn(2+) as cofactor. Post-translationally, the N-terminus of Jararhagin is blocked. In terms of tissue distribution, expressed by the venom gland.

The protein resides in the secreted. It catalyses the reaction Cleavage of 10-His-|-Leu-11, 14-Ala-|-Leu-15, 16-Tyr-|-Leu-17 and 24-Phe-|-Phe-25 bonds in insulin B chain.. Inhibited by EDTA, 1,10 phenanthroline and batimastat (a peptidomimetic MMP inhibitor). In terms of biological role, snake venom zinc metalloproteinase-disintegrin-like jararhagin: causes hemorrhage. This is the result of the degradation of sub-endothelial matrix proteins leading to the disruption of the blood vessel endothelium, with accompanying disturbances in platelet function. It is able to degrade von Willebrand factor (vWF) and it hydrolyzes the alpha-chain of fibrinogen (FGA) while leaving the beta and gamma chains unaffected. It inhibits collagen-induced platelet aggregation through the binding to alpha-2/beta-1 integrin (ITGA2/ITGB1) (collagen receptor), and it cleaves the beta-1 subunit of the same integrin, inhibiting platelet interaction and ultimately causing impairment of signal transduction. It has inability to be affected by the plasma inhibitor alpha(2)-macroglobulin. In fibroblasts, it functions as a collagen-mimetic substrate and, in endothelial cells, it causes apoptosis and indirectly inhibits cell proliferation by release of angiostatin-like compounds. It induces a strong pro-inflammatory response characterized by intense leukocyte accumulation and release of cytokines at the site of the injection. Although hemorrhage and edema are a response to the direct effect of this toxin, jararhagin-induced inflammation and necrosis are dependent on macrophages and key pro-inflammatory cytokines or their receptors. It also possesses anti-tumorgenic properties. Functionally, the monomeric form inhibits collagen- and ADP-induced platelet aggregation, but has no effect on glycoprotein Ib-IX-dependent (GP1BA/GP5/GP9) platelet agglutination. Locally activates the early events of an acute inflammatory response as leukocyte rolling and pro-inflammatory cytokine release. Its function is as follows. The dimeric form jaracetin may be a dimeric form of jararhagin-C. It binds to von Willebrand factor (VWF) and induces its interaction with GPIbalpha (GP1BA) (via the vWF A1 domain), resulting in platelet aggregation. Also binds the alpha-2 subunit of the alpha-2/beta-1 (ITGA2/ITGB1) integrin. It potently induces platelet aggregation in citrated platelet-rich plasma. This Bothrops jararaca (Jararaca) protein is Zinc metalloproteinase-disintegrin-like jararhagin.